Here is a 104-residue protein sequence, read N- to C-terminus: Large ribosomal subunit protein uL24 (104 aa).

Over residues 82 to 92 the composition is skewed to basic and acidic residues; the sequence is RIGYRTDENGK. Residues 82-104 are disordered; it reads RIGYRTDENGKRVRISRRNGKDI. Residues 93 to 104 show a composition bias toward basic residues; it reads RVRISRRNGKDI.

This sequence belongs to the universal ribosomal protein uL24 family. In terms of assembly, part of the 50S ribosomal subunit.

Its function is as follows. One of two assembly initiator proteins, it binds directly to the 5'-end of the 23S rRNA, where it nucleates assembly of the 50S subunit. One of the proteins that surrounds the polypeptide exit tunnel on the outside of the subunit. This Nocardia farcinica (strain IFM 10152) protein is Large ribosomal subunit protein uL24.